The primary structure comprises 369 residues: Peptide chain release factor 2 (369 aa).

N5-methylglutamine is present on glutamine 252.

This sequence belongs to the prokaryotic/mitochondrial release factor family. Post-translationally, methylated by PrmC. Methylation increases the termination efficiency of RF2.

It is found in the cytoplasm. In terms of biological role, peptide chain release factor 2 directs the termination of translation in response to the peptide chain termination codons UGA and UAA. The sequence is that of Peptide chain release factor 2 from Staphylococcus aureus (strain bovine RF122 / ET3-1).